Here is a 106-residue protein sequence, read N- to C-terminus: uncharacterized protein (106 aa).

This sequence belongs to the HesB/IscA family.

This is an uncharacterized protein from Cereibacter sphaeroides (Rhodobacter sphaeroides).